The following is a 177-amino-acid chain: NADH-quinone oxidoreductase subunit B (177 aa).

Residues Cys-56, Cys-57, Cys-121, and Cys-151 each coordinate [4Fe-4S] cluster.

The protein belongs to the complex I 20 kDa subunit family. In terms of assembly, NDH-1 is composed of 14 different subunits. Subunits NuoB, C, D, E, F, and G constitute the peripheral sector of the complex. It depends on [4Fe-4S] cluster as a cofactor.

The protein localises to the cell inner membrane. The enzyme catalyses a quinone + NADH + 5 H(+)(in) = a quinol + NAD(+) + 4 H(+)(out). NDH-1 shuttles electrons from NADH, via FMN and iron-sulfur (Fe-S) centers, to quinones in the respiratory chain. Couples the redox reaction to proton translocation (for every two electrons transferred, four hydrogen ions are translocated across the cytoplasmic membrane), and thus conserves the redox energy in a proton gradient. The chain is NADH-quinone oxidoreductase subunit B from Ruegeria pomeroyi (strain ATCC 700808 / DSM 15171 / DSS-3) (Silicibacter pomeroyi).